The sequence spans 458 residues: MDKKQREDSQKHEKFIHYADGSSLEEINNTVAIPKNAGFWKTLMAFMGPGALVAVGYMDPGNWITSIAGGAQFAYTLISVILVSNLIAMLLQAMAARLGIVTGMDLAQMTRAKTGKKMGIFLWIVTELAIMATDIAEIIGSAIALELIFNIPLLWGVLITAFDVLLLLLLMKLGFRKIEAIVATLVAVILFVFLYEVILAQPNMGDVVRGFVPSPRIMTDKKMLFLALGIVGATVMPHNLYLHSSIAQARQYDRDDVAEKRKAIKFTVIDSNIQLTIAFVVNCLLLILGAAMFYGTNSDLGRFVDLFNALQNKEIVGSIASPMLSLLFAVALLASGQNSTITGTLSGQIVMEGFVRMKIPLWARRVITRGLSILPVIIFTVYYHGNEAQVENLLIYSQVFLSIALPVSMIPLTLFTSDEKIMGPFVNRPWVKYTAWFVTIVLTLLNIYLILQTVGLAA.

Helical transmembrane passes span 38–58 (GFWKTLMAFMGPGALVAVGYM), 86–106 (LIAMLLQAMAARLGIVTGMDL), 119–139 (GIFLWIVTELAIMATDIAEII), 151–171 (IPLLWGVLITAFDVLLLLLLM), 180–200 (AIVATLVAVILFVFLYEVILA), 223–243 (MLFLALGIVGATVMPHNLYLH), 275–295 (LTIAFVVNCLLLILGAAMFYG), 315–335 (IVGSIASPMLSLLFAVALLAS), 370–390 (GLSILPVIIFTVYYHGNEAQV), 395–415 (IYSQVFLSIALPVSMIPLTLF), and 436–456 (WFVTIVLTLLNIYLILQTVGL).

The protein belongs to the NRAMP family.

It is found in the cell membrane. H(+)-stimulated, divalent metal cation uptake system. This Latilactobacillus sakei subsp. sakei (strain 23K) (Lactobacillus sakei subsp. sakei) protein is Divalent metal cation transporter MntH.